Here is a 289-residue protein sequence, read N- to C-terminus: ATP synthase mitochondrial F1 complex assembly factor 2 (289 aa).

The N-terminal 40 residues, M1–Y40, are a transit peptide targeting the mitochondrion. N6-succinyllysine is present on K133.

This sequence belongs to the ATP12 family. Interacts with ATP5F1B; involved in the assembly of the F1 component of the mitochondrial ATP synthase (ATPase). Interacts with FMC1.

The protein localises to the mitochondrion inner membrane. Plays a role in the assembly of the F1 component of the mitochondrial ATP synthase (ATPase). This is ATP synthase mitochondrial F1 complex assembly factor 2 from Mus musculus (Mouse).